We begin with the raw amino-acid sequence, 434 residues long: Protein HEAT INTOLERANT 4 (434 aa).

Residues 1–8 (MKKGAKRK) carry the Nuclear localization signal 1 motif. Over residues 1–15 (MKKGAKRKGVSKAGR) the composition is skewed to basic residues. Positions 1–131 (MKKGAKRKGV…PVPKAKKPRA (131 aa)) are disordered. Basic and acidic residues predominate over residues 30-53 (ETTKTTQEESQQHEEEVVDEVKEN). Positions 54–82 (GEEEEAKGDQEEEEDAKPDSLEEDEENQE) are enriched in acidic residues. The span at 83 to 98 (DEVKAEEVKEEVEKKP) shows a compositional bias: basic and acidic residues. The Nuclear localization signal 2 signature appears at 95-102 (EKKPVARR). Residues 99 to 110 (VARRGGKRKRAT) show a composition bias toward basic residues. The segment covering 111–122 (KKDTEIKDEKKP) has biased composition (basic and acidic residues). A coiled-coil region spans residues 363–394 (VKEQVRAAKKANREAKDARKKAIEEMSEDTKQ). The Nuclear localization signal 3 motif lies at 370–377 (AKKANREA).

Its subcellular location is the nucleus. The protein resides in the nucleolus. Essential protein required for basal thermotolerance, especially during heat-induced chromocentre decondensation, thus regulating transcriptional gene silencing (TGS). This chain is Protein HEAT INTOLERANT 4, found in Arabidopsis thaliana (Mouse-ear cress).